The primary structure comprises 338 residues: Lipoate-protein ligase A (338 aa).

The BPL/LPL catalytic domain maps to 29–216; sequence PATQRVLFLW…AFFAHYGERI (188 aa). ATP-binding positions include R71, 76-79, and K134; that span reads GAVF. K134 contacts (R)-lipoate.

The protein belongs to the LplA family. As to quaternary structure, monomer.

The protein resides in the cytoplasm. The catalysed reaction is L-lysyl-[lipoyl-carrier protein] + (R)-lipoate + ATP = N(6)-[(R)-lipoyl]-L-lysyl-[lipoyl-carrier protein] + AMP + diphosphate + H(+). It participates in protein modification; protein lipoylation via exogenous pathway; protein N(6)-(lipoyl)lysine from lipoate: step 1/2. It functions in the pathway protein modification; protein lipoylation via exogenous pathway; protein N(6)-(lipoyl)lysine from lipoate: step 2/2. Its function is as follows. Catalyzes both the ATP-dependent activation of exogenously supplied lipoate to lipoyl-AMP and the transfer of the activated lipoyl onto the lipoyl domains of lipoate-dependent enzymes. In Salmonella paratyphi A (strain ATCC 9150 / SARB42), this protein is Lipoate-protein ligase A.